Consider the following 569-residue polypeptide: WD repeat-containing protein 20 (569 aa).

Residue Ala-2 is modified to N-acetylalanine. 7 WD repeats span residues 94-138 (RIYK…KETS), 139-210 (KLFN…KSTR), 211-252 (NPLL…FDSV), 253-331 (ELHG…SGSD), 332-426 (EDFQ…NSVP), 427-523 (PPLP…VPLL), and 524-559 (EPLI…CTWG). A phosphoserine mark is found at Ser-357 and Ser-360. Polar residues-rich tracts occupy residues 405-423 (NATS…TPGN) and 431-445 (RSNS…NAGS). The segment at 405–445 (NATSPPAGSNGNSVTTPGNSVPPPLPRSNSLPHSAVSNAGS) is disordered. Phosphoserine is present on residues Ser-432, Ser-434, and Ser-465. Residues 450–468 (MDGAIASGVSKFATLSLHD) are mediates XPO1-dependent nuclear export of WDR20-USP12 complexes.

Interacts with USP12; promotes translocation of USP12/WDR20 to the plasma membrane. Component of the USP12/WDR20/WDR48 deubiquitinating complex. Interacts with USP46; contributes to the cytoplasmic localization of the USP46/WDR20 complex. Component of the USP12/DMWD/WDR48 deubiquitinating complex.

It localises to the cytoplasm. The protein resides in the nucleus. Regulator of deubiquitinating complexes. Activates deubiquitinating activity of complexes containing USP12. Anchors at the base of the ubiquitin-contacting loop of USP12 and remotely modulates the catalytic center of the enzyme. Regulates shuttling of the USP12 deubiquitinase complex between the plasma membrane, cytoplasm and nucleus. This is WD repeat-containing protein 20 (WDR20) from Homo sapiens (Human).